Consider the following 286-residue polypeptide: Aquaporin PIP2-4 (286 aa).

2 helical membrane-spanning segments follow: residues Ala-40 to Ile-60 and Cys-77 to Val-97. The short motif at Asn-109–Ala-111 is the NPA 1 element. The next 3 membrane-spanning stretches (helical) occupy residues Leu-128 to Phe-148, Gly-170 to Ala-190, and Val-204 to Ile-224. The NPA 2 signature appears at Asn-230–Ala-232. A helical transmembrane segment spans residues Ile-252–Leu-272.

Belongs to the MIP/aquaporin (TC 1.A.8) family. PIP (TC 1.A.8.11) subfamily. As to expression, expressed in roots.

It is found in the cell membrane. Its function is as follows. Water channel required to facilitate the transport of water across cell membrane. May play a role in root water uptake. The chain is Aquaporin PIP2-4 (PIP2-4) from Oryza sativa subsp. japonica (Rice).